The primary structure comprises 285 residues: Cytosolic Fe-S cluster assembly factor CFD1 (285 aa).

30–37 (GKGGVGKS) provides a ligand contact to ATP. Residues cysteine 206 and cysteine 209 each coordinate [4Fe-4S] cluster.

The protein belongs to the Mrp/NBP35 ATP-binding proteins family. NUBP2/CFD1 subfamily. In terms of assembly, heterotetramer of 2 NBP35 and 2 CFD1 chains. [4Fe-4S] cluster is required as a cofactor.

Its subcellular location is the cytoplasm. Component of the cytosolic iron-sulfur (Fe/S) protein assembly (CIA) machinery. Required for maturation of extramitochondrial Fe-S proteins. The NBP35-CFD1 heterotetramer forms a Fe-S scaffold complex, mediating the de novo assembly of an Fe-S cluster and its transfer to target apoproteins. Required for biogenesis and export of both ribosomal subunits, which may reflect a role in assembly of the Fe/S clusters in RLI1, a protein which performs rRNA processing and ribosome export. The chain is Cytosolic Fe-S cluster assembly factor CFD1 from Candida glabrata (strain ATCC 2001 / BCRC 20586 / JCM 3761 / NBRC 0622 / NRRL Y-65 / CBS 138) (Yeast).